The chain runs to 403 residues: Phosphopentomutase (403 aa).

Residues aspartate 13, aspartate 298, histidine 303, aspartate 339, histidine 340, and histidine 351 each coordinate Mn(2+).

Belongs to the phosphopentomutase family. Mn(2+) is required as a cofactor.

Its subcellular location is the cytoplasm. It catalyses the reaction 2-deoxy-alpha-D-ribose 1-phosphate = 2-deoxy-D-ribose 5-phosphate. The enzyme catalyses alpha-D-ribose 1-phosphate = D-ribose 5-phosphate. It functions in the pathway carbohydrate degradation; 2-deoxy-D-ribose 1-phosphate degradation; D-glyceraldehyde 3-phosphate and acetaldehyde from 2-deoxy-alpha-D-ribose 1-phosphate: step 1/2. Functionally, isomerase that catalyzes the conversion of deoxy-ribose 1-phosphate (dRib-1-P) and ribose 1-phosphate (Rib-1-P) to deoxy-ribose 5-phosphate (dRib-5-P) and ribose 5-phosphate (Rib-5-P), respectively. This chain is Phosphopentomutase, found in Streptococcus thermophilus.